The primary structure comprises 705 residues: Polyribonucleotide nucleotidyltransferase (705 aa).

Asp486 and Asp492 together coordinate Mg(2+). Positions 553-612 (PQFHTMKVDPEKIRDIIGKGGATIRSITEETGASIDIDDDGTVKIYGDDGDSLQGAINRI) constitute a KH domain. An S1 motif domain is found at 622–690 (GEVYKGKVVR…QRGRIKLSIK (69 aa)).

It belongs to the polyribonucleotide nucleotidyltransferase family. In terms of assembly, component of the RNA degradosome, which is a multiprotein complex involved in RNA processing and mRNA degradation. Mg(2+) serves as cofactor.

It localises to the cytoplasm. It carries out the reaction RNA(n+1) + phosphate = RNA(n) + a ribonucleoside 5'-diphosphate. Functionally, involved in mRNA degradation. Catalyzes the phosphorolysis of single-stranded polyribonucleotides processively in the 3'- to 5'-direction. The chain is Polyribonucleotide nucleotidyltransferase from Teredinibacter turnerae (strain ATCC 39867 / T7901).